The following is a 617-amino-acid chain: NADPH-dependent diflavin oxidoreductase 1 (617 aa).

Positions 3-147 (PMILYASETG…AFLPWLQQTL (145 aa)) constitute a Flavodoxin-like domain. Residues 9–14 (SETGNA), 56–59 (STHG), 94–103 (LGDSSYERFC), and glutamate 129 contribute to the FMN site. One can recognise an FAD-binding FR-type domain in the interval 226-465 (DDWVWATLKK…HIASPTLFLP (240 aa)). FAD contacts are provided by residues 404 to 407 (RQFS) and 438 to 441 (GLCS). NADP(+) is bound by residues threonine 479, 534–535 (SR), and 540–544 (RIYVQ). Position 617 (tryptophan 617) interacts with FAD.

The protein belongs to the NADPH-dependent diflavin oxidoreductase NDOR1 family. In the N-terminal section; belongs to the flavodoxin family. It in the C-terminal section; belongs to the flavoprotein pyridine nucleotide cytochrome reductase family. As to quaternary structure, interacts with DRE2; as part of the cytosolic iron-sulfur (Fe-S) protein assembly (CIA) machinery. FAD is required as a cofactor. Requires FMN as cofactor.

Its subcellular location is the cytoplasm. It localises to the mitochondrion. The enzyme catalyses 2 oxidized [2Fe-2S]-[protein] + NADPH = 2 reduced [2Fe-2S]-[protein] + NADP(+) + H(+). In terms of biological role, NADPH-dependent reductase which is a central component of the cytosolic iron-sulfur (Fe-S) protein assembly (CIA) machinery. Transfers electrons from NADPH via its FAD and FMN prosthetic groups to the [2Fe-2S] cluster of DRE2, another key component of the CIA machinery. In turn, this reduced cluster provides electrons for assembly of cytosolic iron-sulfur cluster proteins. Positively controls H(2)O(2)-induced cell death. This Cryptococcus neoformans var. neoformans serotype D (strain B-3501A) (Filobasidiella neoformans) protein is NADPH-dependent diflavin oxidoreductase 1.